A 339-amino-acid polypeptide reads, in one-letter code: Geranylgeranyl pyrophosphate synthase AN1592 (339 aa).

The isopentenyl diphosphate site is built by Lys-41, Arg-44, and His-73. 2 residues coordinate Mg(2+): Asp-80 and Asp-84. A dimethylallyl diphosphate-binding site is contributed by Arg-89. Arg-90 is an isopentenyl diphosphate binding site. Lys-192, Thr-193, and Gln-228 together coordinate dimethylallyl diphosphate. Asp-231 contributes to the Mg(2+) binding site. Dimethylallyl diphosphate is bound by residues Asn-235, Lys-245, and Lys-255.

It belongs to the FPP/GGPP synthase family. Mg(2+) is required as a cofactor.

The enzyme catalyses isopentenyl diphosphate + dimethylallyl diphosphate = (2E)-geranyl diphosphate + diphosphate. It catalyses the reaction isopentenyl diphosphate + (2E)-geranyl diphosphate = (2E,6E)-farnesyl diphosphate + diphosphate. It carries out the reaction isopentenyl diphosphate + (2E,6E)-farnesyl diphosphate = (2E,6E,10E)-geranylgeranyl diphosphate + diphosphate. The protein operates within secondary metabolite biosynthesis. Functionally, geranylgeranyl pyrophosphate synthase; part of the gene cluster that mediates the biosynthesis of erinacines, cyathane-xylosides that show unique biological activities, including leishmanicidal activity, stimulating activity for nerve growth-factor synthesis, and agonistic activity toward the kappa opioid receptor. The geranylgeranyl diphosphate (GGPP) synthase eriE catalyzes the first step in erinacines biosynthesis via conversion of farnesyl pyrophosphate and isopentyl pyrophosphate into geranylgeranyl pyrophosphate (GGPP). GGPP is then substrate of the diterpene cyclase eriG for the production of cyatha-3,12-diene. The cytochrome P450 monooxygenase eriI then hydroxylates cyatha-3,12-diene at C-14 of the seven-membered ring to produce erinacol, which is further hydroxylated at C-15 by the cytochrome P450 monooxygenase eriC to yield cyathadiol. The cytochrome P450 monooxygenase eriA then catalyzes C-11 hydroxylation in the presence of the short chain dehydrogenase/reductase (SDR) eriH, which leads to the production of cyathatriol. The acetyltransferase eriL converts cyathatriol into 11-O-acetyl-cyathatriol. The SDR eriH catalyzes further oxidation of 11-O-acetyl-cyathatriol into 1-O-acetylcyathin A3. Finally, the glycosyl transferase eriJ tranfers xylose from UDP-xylose onto C-14 of 11-O-acetyl-cyathatriol to form eracine Q. EriJ is also able to convert 11-O-acetyl-cyathatriol to eracine Q2 by using UDP-D-glucose as cosubstrate, but at a lower rate. In the absence of eriL and eriJ, the SDR eriH is able to convert cyathatriol to cyathin A3; this is likely a switching mechanism in the biosynthesis of cyathins (C-14 ketogroup)and erinacines (C-14 glycosylated group). The roles of the SDR eriB, the polyprenyl transferase eriF and the dehydrogenase eriK have still to be identified. The sequence is that of Geranylgeranyl pyrophosphate synthase AN1592 from Hericium erinaceus (Lion's mane mushroom).